A 672-amino-acid chain; its full sequence is MDLAALRAKTPDHWKLATAIRVLAIDAVQAANSGHPGMPMGMADVATVLFRNHLKFDAKAPNWADRDRFVLSAGHGSMLLYALLHLTGYEQATLDEVKNFRQWGARMAGHPEYGHLEGVETTTGPLGQGISTAVGMAIAEKSMAARFGKKLVDHKIWVIAGDGCLMEGISQEAIGLAGKQELDNLIVLWDNNNITIDGRVTVSDVTDQKARFAASGWDVLSCDGHDAEDIDRALTAAKKAKRPVLVDCKTLIGFGSPNKADSYAVHGAPLGDAEIKLTREAYGWEHGPFVIPAEIKAEWEAIGAKGAAERAEWEARLAALPAGKRAEFERQMARGVAPKLAGAIRAFKKAQSEAAPKVATRKASEMVLAAVNPVVPETIGGSADLTGSNLTKTSDIEDFMPGNHKGRYMRYGIREHAMAAAMNGMWLHGGVRPYGGTFFCFTDYARGAMRLSSLMGVPTVYVMTHDSIGLGEDGPTHQPVEHLAICRATPNTWTFRPADVIETAEAWELALSSERTPSVLALSRQNLPTLRTKHEAKNLTAKGAYVIAEAEGKRQAILMATGSEVEIALKARALLQAEAIGTRVVSMPCMELFAAQDEAYRKRILPAGGVRVAVEAAIRQPWDRWLLGERGMERKAGFVGMEGFGASAPAERLYAEFGITPEAIAAKVKSLL.

Residue H35 coordinates substrate. Thiamine diphosphate-binding positions include H75 and 124-126; that span reads GPL. Residue D162 participates in Mg(2+) binding. 2 residues coordinate thiamine diphosphate: G163 and N192. The Mg(2+) site is built by N192 and I194. Residues H266, R361, and S388 each coordinate substrate. H266 contributes to the thiamine diphosphate binding site. The Proton donor role is filled by E415. Residue F441 participates in thiamine diphosphate binding. H465, D473, and R524 together coordinate substrate.

The protein belongs to the transketolase family. As to quaternary structure, homodimer. It depends on Mg(2+) as a cofactor. Ca(2+) is required as a cofactor. Mn(2+) serves as cofactor. The cofactor is Co(2+). Requires thiamine diphosphate as cofactor.

It catalyses the reaction D-sedoheptulose 7-phosphate + D-glyceraldehyde 3-phosphate = aldehydo-D-ribose 5-phosphate + D-xylulose 5-phosphate. Its pathway is carbohydrate biosynthesis; Calvin cycle. It participates in carbohydrate degradation; pentose phosphate pathway. Its function is as follows. Catalyzes the transfer of a two-carbon ketol group from a ketose donor to an aldose acceptor, via a covalent intermediate with the cofactor thiamine pyrophosphate. The sequence is that of Transketolase (tktA) from Rhodobacter capsulatus (strain ATCC BAA-309 / NBRC 16581 / SB1003).